A 310-amino-acid chain; its full sequence is Aspartate carbamoyltransferase catalytic subunit (310 aa).

Arg-58 and Thr-59 together coordinate carbamoyl phosphate. Residue Lys-87 coordinates L-aspartate. Residues Arg-108, His-136, and Gln-139 each coordinate carbamoyl phosphate. L-aspartate contacts are provided by Arg-169 and Arg-229. Residues Leu-268 and Pro-269 each coordinate carbamoyl phosphate.

Belongs to the aspartate/ornithine carbamoyltransferase superfamily. ATCase family. Heterododecamer (2C3:3R2) of six catalytic PyrB chains organized as two trimers (C3), and six regulatory PyrI chains organized as three dimers (R2).

It carries out the reaction carbamoyl phosphate + L-aspartate = N-carbamoyl-L-aspartate + phosphate + H(+). Its pathway is pyrimidine metabolism; UMP biosynthesis via de novo pathway; (S)-dihydroorotate from bicarbonate: step 2/3. Its function is as follows. Catalyzes the condensation of carbamoyl phosphate and aspartate to form carbamoyl aspartate and inorganic phosphate, the committed step in the de novo pyrimidine nucleotide biosynthesis pathway. In Leptospira biflexa serovar Patoc (strain Patoc 1 / Ames), this protein is Aspartate carbamoyltransferase catalytic subunit.